A 79-amino-acid polypeptide reads, in one-letter code: Acyl carrier protein (79 aa).

The Carrier domain maps to Asp2 to Val77. Ser37 carries the post-translational modification O-(pantetheine 4'-phosphoryl)serine.

Belongs to the acyl carrier protein (ACP) family. Post-translationally, 4'-phosphopantetheine is transferred from CoA to a specific serine of apo-ACP by AcpS. This modification is essential for activity because fatty acids are bound in thioester linkage to the sulfhydryl of the prosthetic group.

Its subcellular location is the cytoplasm. It participates in lipid metabolism; fatty acid biosynthesis. Carrier of the growing fatty acid chain in fatty acid biosynthesis. The polypeptide is Acyl carrier protein (Burkholderia cenocepacia (strain HI2424)).